The sequence spans 927 residues: MTIGITGPERKAPRQSAVVGLIIAALVIAIVLTLLALASDFLVDWLWFSVIGYREVFWTTIGAKAVVFLAVWTATAVILLLNGWLALHFARRRSTQLAAASVWSAAGNAPPDLLALVRDRLRWPRLIAAGAASLALLVAAAEAGNWGVFLQFVYQAPYGADDPLYNNDIGFYLFSLPAYILIKNWMMLALALSALFAAAIYLVHGEIEYDIHRRSMSSTVIAHGSALLGLLFAVKAWSFGLDRYLLLYGDNGVVVGASYTDVHVGLPALWLMIGLSGIAALAAWANVRVRTYRLPAAAFLLVAIGSFVLSGLVPVLFRQFFVRPSELELERPYIERNIALTRQAYNLDQIAAKPFAAEQKLSFKTLDANKATIDNIRLWDWQPLADTYAQLQEIRTYYKFHHLDVDRYWLNGSYQSVMISARELRPSLLPPNAQTWVNHHVLFTHGTGAVMSPVTRKSSEGLPFLYLRDIPPVADGGPQIREPRIYYGEEHDSYVIVKGSTPEFDYPKGKDNVYAAYDGTGGVPIGAAVWRGLFAYYFNDPNLLLSSYITADSRIMIRRNIGERVRTIAPFLRLDHDPYLVISNGRMFWMQDAYTVSSYFPSAQPAQDQDLNYIRNSVKVIVDAYNGTVDFYLMDTGDPVAATWRRIFPNLFKPFSVMPADLQRHIRYPEDLFLIQAQLYQSYHMEAADVFYNREDLWQFPRQPGGGGVATMAPYYIIMRLPGESQAEFFLMLPMVPSRRDNMIAWLAARCDAPDYGKLIVYEFPKEKLVYGPFQIEARINQSTEISQQITLWNQMGSRVIRGANLLVIPIENSILYVTPLYLRAEHGHLPELKRVIAAYGEHVVMKETLDEALSALFTEPGAVRPVSSTMEEMPVTRPSASQAREALDRYNQAVERLRSGDWKGFGTQFDAMRELLEDMNRHSADR.

The next 7 membrane-spanning stretches (helical) occupy residues 17–37 (AVVGLIIAALVIAIVLTLLAL), 65–85 (AVVFLAVWTATAVILLLNGWL), 134–154 (LALLVAAAEAGNWGVFLQFVY), 185–205 (WMMLALALSALFAAAIYLVHG), 220–240 (VIAHGSALLGLLFAVKAWSFG), 264–284 (VGLPALWLMIGLSGIAALAAW), and 297–317 (AAFLLVAIGSFVLSGLVPVLF).

This sequence belongs to the UPF0182 family.

The protein resides in the cell membrane. The sequence is that of UPF0182 protein bll7333 from Bradyrhizobium diazoefficiens (strain JCM 10833 / BCRC 13528 / IAM 13628 / NBRC 14792 / USDA 110).